Reading from the N-terminus, the 389-residue chain is Sulfate adenylyltransferase (389 aa).

It belongs to the sulfate adenylyltransferase family.

It carries out the reaction sulfate + ATP + H(+) = adenosine 5'-phosphosulfate + diphosphate. It functions in the pathway sulfur metabolism; hydrogen sulfide biosynthesis; sulfite from sulfate: step 1/3. This chain is Sulfate adenylyltransferase, found in Deinococcus deserti (strain DSM 17065 / CIP 109153 / LMG 22923 / VCD115).